A 177-amino-acid polypeptide reads, in one-letter code: Large ribosomal subunit protein uL6 (177 aa).

This sequence belongs to the universal ribosomal protein uL6 family. In terms of assembly, part of the 50S ribosomal subunit.

Functionally, this protein binds to the 23S rRNA, and is important in its secondary structure. It is located near the subunit interface in the base of the L7/L12 stalk, and near the tRNA binding site of the peptidyltransferase center. The protein is Large ribosomal subunit protein uL6 of Bordetella avium (strain 197N).